Consider the following 502-residue polypeptide: Glutamate decarboxylase 1 (502 aa).

Ser-8 is subject to Phosphoserine. N6-(pyridoxal phosphate)lysine is present on Lys-277. The tract at residues 469–502 (LMVTVKKSDIDKQRDIITGWKKFVADRKKTSGIC) is calmodulin-binding.

Belongs to the group II decarboxylase family. Homohexamer. Interacts with calmodulin with a 1:3 stoichiometry. Pyridoxal 5'-phosphate is required as a cofactor. Expressed in roots. Detected at low levels in shoots of young seedlings. Not detected in the root tips or in the central vascular bundle in the elongating region of mature roots.

The catalysed reaction is L-glutamate + H(+) = 4-aminobutanoate + CO2. With respect to regulation, up-regulated by calmodulin binding at physiological pH. Functionally, catalyzes the conversion of glutamate to 4-aminobutanoate (GABA). The calmodulin-binding is calcium-dependent and it is proposed to directly or indirectly form a calcium regulated control of GABA biosynthesis. This Arabidopsis thaliana (Mouse-ear cress) protein is Glutamate decarboxylase 1 (GAD1).